The sequence spans 366 residues: Chorismate synthase (366 aa).

Arg48 contacts NADP(+). Residues Arg125–Ser127, Asn241–Ala242, Gly285, Lys300–Ser304, and Arg326 each bind FMN.

It belongs to the chorismate synthase family. Homotetramer. Requires FMNH2 as cofactor.

It carries out the reaction 5-O-(1-carboxyvinyl)-3-phosphoshikimate = chorismate + phosphate. It participates in metabolic intermediate biosynthesis; chorismate biosynthesis; chorismate from D-erythrose 4-phosphate and phosphoenolpyruvate: step 7/7. Functionally, catalyzes the anti-1,4-elimination of the C-3 phosphate and the C-6 proR hydrogen from 5-enolpyruvylshikimate-3-phosphate (EPSP) to yield chorismate, which is the branch point compound that serves as the starting substrate for the three terminal pathways of aromatic amino acid biosynthesis. This reaction introduces a second double bond into the aromatic ring system. The protein is Chorismate synthase of Ruegeria pomeroyi (strain ATCC 700808 / DSM 15171 / DSS-3) (Silicibacter pomeroyi).